A 544-amino-acid polypeptide reads, in one-letter code: Propane 2-monooxygenase, hydroxylase component large subunit (544 aa).

6 residues coordinate Fe cation: Glu-97, Glu-127, His-130, Glu-192, Glu-226, and His-229.

Belongs to the TmoA/XamoA family. The propane 2-monooxygenase multicomponent enzyme system is composed of an electron transfer component and a monooxygenase component interacting with the effector protein PrmD. The electron transfer component is composed of a reductase (PrmB), and the monooxygenase component is formed by a large subunit (PrmA) and a small subunit (PrmC). Probably requires the presence of the chaperonin-like protein PrmG to ensure a productive folding, resulting of a soluble PrmA, which leads to the active form of PrmABCD. The cofactor is Fe(2+).

The enzyme catalyses propane + NADH + O2 + H(+) = propan-2-ol + NAD(+) + H2O. Functionally, component of the propane 2-monooxygenase multicomponent enzyme system which is involved in the degradation of propane via the O2-dependent hydroxylation of propane. Also able to catalyze the oxidation the water contaminant N-nitrosodimethylamine (NDMA). This chain is Propane 2-monooxygenase, hydroxylase component large subunit, found in Rhodococcus jostii (strain RHA1).